A 182-amino-acid polypeptide reads, in one-letter code: MKTAILDLERLPERGEVVINAEGHIAGRLATYIAKALLEKPGLRIVVVNAEKLVVTGDEKMVVEWFKRKISEWGTHYNPEKAGPKIPRRPDRVFKRMVRGMLPKRAESGRRALKRLRVYVSVPMELLSRKRLVVYEVPPAKLRMRPLAKYVTLEEVWRQVDPAAWEQWKKAQELWQKRLKPS.

Belongs to the universal ribosomal protein uL13 family. Part of the 50S ribosomal subunit.

Functionally, this protein is one of the early assembly proteins of the 50S ribosomal subunit, although it is not seen to bind rRNA by itself. It is important during the early stages of 50S assembly. The chain is Large ribosomal subunit protein uL13 from Pyrobaculum neutrophilum (strain DSM 2338 / JCM 9278 / NBRC 100436 / V24Sta) (Thermoproteus neutrophilus).